The following is a 105-amino-acid chain: Large ribosomal subunit protein uL24 (105 aa).

This sequence belongs to the universal ribosomal protein uL24 family. In terms of assembly, part of the 50S ribosomal subunit.

Functionally, one of two assembly initiator proteins, it binds directly to the 5'-end of the 23S rRNA, where it nucleates assembly of the 50S subunit. One of the proteins that surrounds the polypeptide exit tunnel on the outside of the subunit. The chain is Large ribosomal subunit protein uL24 from Pseudothermotoga lettingae (strain ATCC BAA-301 / DSM 14385 / NBRC 107922 / TMO) (Thermotoga lettingae).